The primary structure comprises 225 residues: Enolase-phosphatase E1 (225 aa).

The protein belongs to the HAD-like hydrolase superfamily. MasA/MtnC family. As to quaternary structure, monomer. The cofactor is Mg(2+).

The enzyme catalyses 5-methylsulfanyl-2,3-dioxopentyl phosphate + H2O = 1,2-dihydroxy-5-(methylsulfanyl)pent-1-en-3-one + phosphate. It functions in the pathway amino-acid biosynthesis; L-methionine biosynthesis via salvage pathway; L-methionine from S-methyl-5-thio-alpha-D-ribose 1-phosphate: step 3/6. It participates in amino-acid biosynthesis; L-methionine biosynthesis via salvage pathway; L-methionine from S-methyl-5-thio-alpha-D-ribose 1-phosphate: step 4/6. Bifunctional enzyme that catalyzes the enolization of 2,3-diketo-5-methylthiopentyl-1-phosphate (DK-MTP-1-P) into the intermediate 2-hydroxy-3-keto-5-methylthiopentenyl-1-phosphate (HK-MTPenyl-1-P), which is then dephosphorylated to form the acireductone 1,2-dihydroxy-3-keto-5-methylthiopentene (DHK-MTPene). The sequence is that of Enolase-phosphatase E1 from Shewanella loihica (strain ATCC BAA-1088 / PV-4).